A 210-amino-acid chain; its full sequence is Thiamine-phosphate synthase (210 aa).

Residues 39 to 43 (QLREK) and Asn-71 contribute to the 4-amino-2-methyl-5-(diphosphooxymethyl)pyrimidine site. Mg(2+) is bound by residues Asp-72 and Asp-91. Residue Ser-110 participates in 4-amino-2-methyl-5-(diphosphooxymethyl)pyrimidine binding. Position 134–136 (134–136 (TPT)) interacts with 2-[(2R,5Z)-2-carboxy-4-methylthiazol-5(2H)-ylidene]ethyl phosphate. Residue Lys-137 coordinates 4-amino-2-methyl-5-(diphosphooxymethyl)pyrimidine. Gly-163 is a binding site for 2-[(2R,5Z)-2-carboxy-4-methylthiazol-5(2H)-ylidene]ethyl phosphate.

It belongs to the thiamine-phosphate synthase family. It depends on Mg(2+) as a cofactor.

It carries out the reaction 2-[(2R,5Z)-2-carboxy-4-methylthiazol-5(2H)-ylidene]ethyl phosphate + 4-amino-2-methyl-5-(diphosphooxymethyl)pyrimidine + 2 H(+) = thiamine phosphate + CO2 + diphosphate. The enzyme catalyses 2-(2-carboxy-4-methylthiazol-5-yl)ethyl phosphate + 4-amino-2-methyl-5-(diphosphooxymethyl)pyrimidine + 2 H(+) = thiamine phosphate + CO2 + diphosphate. The catalysed reaction is 4-methyl-5-(2-phosphooxyethyl)-thiazole + 4-amino-2-methyl-5-(diphosphooxymethyl)pyrimidine + H(+) = thiamine phosphate + diphosphate. It functions in the pathway cofactor biosynthesis; thiamine diphosphate biosynthesis; thiamine phosphate from 4-amino-2-methyl-5-diphosphomethylpyrimidine and 4-methyl-5-(2-phosphoethyl)-thiazole: step 1/1. Functionally, condenses 4-methyl-5-(beta-hydroxyethyl)thiazole monophosphate (THZ-P) and 2-methyl-4-amino-5-hydroxymethyl pyrimidine pyrophosphate (HMP-PP) to form thiamine monophosphate (TMP). This chain is Thiamine-phosphate synthase, found in Campylobacter jejuni subsp. jejuni serotype O:6 (strain 81116 / NCTC 11828).